We begin with the raw amino-acid sequence, 83 residues long: Toxin To15 (83 aa).

The signal sequence occupies residues 1-19 (MKGIILLISCLMLIEVVVG). The LCN-type CS-alpha/beta domain maps to 21–82 (KEGYPLDSSG…IWNAKTNKCY (62 aa)). Disulfide bonds link Cys-31–Cys-81, Cys-35–Cys-57, Cys-43–Cys-62, and Cys-47–Cys-64.

The protein belongs to the long (4 C-C) scorpion toxin superfamily. Sodium channel inhibitor family. Beta subfamily. In terms of tissue distribution, expressed by the venom gland.

It localises to the secreted. In terms of biological role, beta toxins bind voltage-independently at site-4 of sodium channels (Nav) and shift the voltage of activation toward more negative potentials thereby affecting sodium channel activation and promoting spontaneous and repetitive firing. This chain is Toxin To15, found in Tityus obscurus (Amazonian scorpion).